Here is a 66-residue protein sequence, read N- to C-terminus: Beta-toxin ChFII.9 (66 aa).

Residues 1–66 (KEGYIVDYHT…VWPLPNKRCK (66 aa)) enclose the LCN-type CS-alpha/beta domain. Intrachain disulfides connect Cys-12–Cys-65, Cys-16–Cys-41, Cys-25–Cys-46, and Cys-29–Cys-48. Residue Lys-66 is modified to Lysine amide.

As to expression, expressed by the venom gland.

The protein localises to the secreted. Beta toxins bind voltage independently at site-4 of sodium channels (Nav) and shift the activation voltage toward more negative potentials, thereby affecting sodium channel activation CC and promoting spontaneous and repetitive firing. This chain is Beta-toxin ChFII.9, found in Centruroides hirsutipalpus (Scorpion).